A 313-amino-acid polypeptide reads, in one-letter code: Protein FixB (313 aa).

Position 255 to 283 (Leu255 to Asp283) interacts with FAD.

The protein belongs to the ETF alpha-subunit/FixB family. As to quaternary structure, heterodimer of FixA and FixB.

It participates in amine and polyamine metabolism; carnitine metabolism. Functionally, required for anaerobic carnitine reduction. May bring reductant to CaiA. The chain is Protein FixB from Escherichia coli (strain SMS-3-5 / SECEC).